A 94-amino-acid polypeptide reads, in one-letter code: MFVDDNSLIIYSTWPSTLSDSSGRVIIMPDNRSFTFKEGFKLDESIKSILLVNPSSIDLLKIRVYKHRIKWMGDIFVLFEQENIPPPFRLVNDK.

This sequence belongs to the orthopoxvirus OPG142 family. Part of a complex composed of the kinase OPG054, OPG092, OPG100, OPG114, OPG115, OPG142 and OPG157.

The protein localises to the host cytoplasm. It is found in the virion. Functionally, late protein which is a part of a large complex required for early virion morphogenesis. This complex participates in the formation of virosomes and the incorporation of virosomal contents into nascent immature virions. Required for the stability and kinase activity of OPG054. The chain is Core protein OPG142 (OPG142) from Cynomys gunnisoni (Gunnison's prairie dog).